Reading from the N-terminus, the 391-residue chain is Formate-dependent phosphoribosylglycinamide formyltransferase (391 aa).

N(1)-(5-phospho-beta-D-ribosyl)glycinamide contacts are provided by residues 18–19 and glutamate 78; that span reads EL. ATP is bound by residues arginine 110, lysine 151, 156–161, 191–194, and glutamate 199; these read SSGKGQ and EEFI. Positions 115-305 constitute an ATP-grasp domain; it reads DLAAQQLGLR…EFELHLRAVL (191 aa). Residues glutamate 264 and glutamate 276 each coordinate Mg(2+). N(1)-(5-phospho-beta-D-ribosyl)glycinamide contacts are provided by residues aspartate 283, lysine 353, and 360 to 361; that span reads RR.

The protein belongs to the PurK/PurT family. As to quaternary structure, homodimer.

It carries out the reaction N(1)-(5-phospho-beta-D-ribosyl)glycinamide + formate + ATP = N(2)-formyl-N(1)-(5-phospho-beta-D-ribosyl)glycinamide + ADP + phosphate + H(+). It participates in purine metabolism; IMP biosynthesis via de novo pathway; N(2)-formyl-N(1)-(5-phospho-D-ribosyl)glycinamide from N(1)-(5-phospho-D-ribosyl)glycinamide (formate route): step 1/1. Involved in the de novo purine biosynthesis. Catalyzes the transfer of formate to 5-phospho-ribosyl-glycinamide (GAR), producing 5-phospho-ribosyl-N-formylglycinamide (FGAR). Formate is provided by PurU via hydrolysis of 10-formyl-tetrahydrofolate. The sequence is that of Formate-dependent phosphoribosylglycinamide formyltransferase from Synechococcus elongatus (strain ATCC 33912 / PCC 7942 / FACHB-805) (Anacystis nidulans R2).